A 232-amino-acid chain; its full sequence is 2-C-methyl-D-erythritol 4-phosphate cytidylyltransferase (232 aa).

It belongs to the IspD/TarI cytidylyltransferase family. IspD subfamily.

The enzyme catalyses 2-C-methyl-D-erythritol 4-phosphate + CTP + H(+) = 4-CDP-2-C-methyl-D-erythritol + diphosphate. It functions in the pathway isoprenoid biosynthesis; isopentenyl diphosphate biosynthesis via DXP pathway; isopentenyl diphosphate from 1-deoxy-D-xylulose 5-phosphate: step 2/6. Its function is as follows. Catalyzes the formation of 4-diphosphocytidyl-2-C-methyl-D-erythritol from CTP and 2-C-methyl-D-erythritol 4-phosphate (MEP). In Rhodococcus erythropolis (strain PR4 / NBRC 100887), this protein is 2-C-methyl-D-erythritol 4-phosphate cytidylyltransferase.